Consider the following 35-residue polypeptide: Cecropin-A (35 aa).

Leu35 carries the post-translational modification Leucine amide.

Monomer. As to expression, hemolymph.

It localises to the secreted. In terms of biological role, cecropins have lytic and antibacterial activity against several Gram-positive and Gram-negative bacteria. Also has activity against fungi. The sequence is that of Cecropin-A from Heliothis virescens (Tobacco budworm moth).